The chain runs to 104 residues: UPF0045 protein YqgV (104 aa).

Belongs to the UPF0045 family.

The chain is UPF0045 protein YqgV (yqgV) from Bacillus subtilis (strain 168).